The following is a 582-amino-acid chain: Zinc finger protein 614 (582 aa).

A KRAB domain is found at 8-79; it reads LTLEDVAVEF…VAKIQNKNCP (72 aa). The segment at 202-224 adopts a C2H2-type 1 zinc-finger fold; the sequence is HACIECEQTFLRKSQLIYHENIH. A C2H2-type 2; degenerate zinc finger spans residues 254 to 278; sequence KICIPNEYRKGSTVNSRLIAHQQTH. C2H2-type zinc fingers lie at residues 284–306, 312–334, 340–362, 368–390, 396–418, 424–446, 452–474, 480–502, 508–530, and 536–558; these read YMCS…QRTH, YVCN…QRTH, YICS…QRTH, YICS…QRSH, YICN…QRTH, YECN…ERCH, FVCT…QRIH, YECN…QRTH, and YGCS…KKMH.

It belongs to the krueppel C2H2-type zinc-finger protein family.

The protein localises to the nucleus. Its function is as follows. May be involved in transcriptional regulation. This Macaca fascicularis (Crab-eating macaque) protein is Zinc finger protein 614 (ZNF614).